A 435-amino-acid chain; its full sequence is AP-2 complex subunit mu (435 aa).

Residue serine 45 is modified to Phosphoserine. Threonine 156 carries the post-translational modification Phosphothreonine. Positions 170–434 (RNELFLDVLE…IGRSGIYETR (265 aa)) constitute an MHD domain. Lysine 341, lysine 345, and lysine 354 together coordinate a 1,2-diacyl-sn-glycero-3-phospho-(1D-myo-inositol-3,4,5-trisphosphate).

It belongs to the adaptor complexes medium subunit family. As to quaternary structure, adaptor protein complex 2 (AP-2) is a heterotetramer composed of two large adaptins (alpha-type subunit AP2A1 or AP2A2 and beta-type subunit AP2B1), a medium adaptin (mu-type subunit AP2M1) and a small adaptin (sigma-type subunit AP2S1). Interacts with ATP6V1H and MEGF10. Interacts with EGFR and TTGN1. Interacts with F2R. Interacts with PIP5K1C; tyrosine phosphorylation of PIP5K1C weakens the interaction. Interacts with KIAA0319; required for clathrin-mediated endocytosis of KIAA0319. Interacts with DVL2 (via DEP domain). Interacts with KCNQ1; mediates estrogen-induced internalization via clathrin-coated vesicles. Interacts with P2RX4 (via internalization motif). Together with AP2A1 or AP2A2 and AP2B1, it interacts with ADAM10; this interaction facilitates ADAM10 endocytosis from the plasma membrane during long-term potentiation in hippocampal neurons. Probably interacts with ACE2 (via endocytic sorting signal motif); the interaction is inhibited by ACE2 phosphorylation. Interacts with RALBP1; the interaction is direct. Interacts with TMEM106B (via N-terminus). Post-translationally, phosphorylation at Thr-156 increases the affinity of the AP-2 complex for cargo membrane proteins during the initial stages of endocytosis.

Its subcellular location is the cell membrane. It localises to the membrane. The protein localises to the coated pit. Component of the adaptor protein complex 2 (AP-2). Adaptor protein complexes function in protein transport via transport vesicles in different membrane traffic pathways. Adaptor protein complexes are vesicle coat components and appear to be involved in cargo selection and vesicle formation. AP-2 is involved in clathrin-dependent endocytosis in which cargo proteins are incorporated into vesicles surrounded by clathrin (clathrin-coated vesicles, CCVs) which are destined for fusion with the early endosome. The clathrin lattice serves as a mechanical scaffold but is itself unable to bind directly to membrane components. Clathrin-associated adaptor protein (AP) complexes which can bind directly to both the clathrin lattice and to the lipid and protein components of membranes are considered to be the major clathrin adaptors contributing the CCV formation. AP-2 also serves as a cargo receptor to selectively sort the membrane proteins involved in receptor-mediated endocytosis. AP-2 seems to play a role in the recycling of synaptic vesicle membranes from the presynaptic surface. AP-2 recognizes Y-X-X-[FILMV] (Y-X-X-Phi) and [ED]-X-X-X-L-[LI] endocytosis signal motifs within the cytosolic tails of transmembrane cargo molecules. AP-2 may also play a role in maintaining normal post-endocytic trafficking through the ARF6-regulated, non-clathrin pathway. During long-term potentiation in hippocampal neurons, AP-2 is responsible for the endocytosis of ADAM10. The AP-2 mu subunit binds to transmembrane cargo proteins; it recognizes the Y-X-X-Phi motifs. The surface region interacting with to the Y-X-X-Phi motif is inaccessible in cytosolic AP-2, but becomes accessible through a conformational change following phosphorylation of AP-2 mu subunit at Thr-156 in membrane-associated AP-2. The membrane-specific phosphorylation event appears to involve assembled clathrin which activates the AP-2 mu kinase AAK1. Plays a role in endocytosis of frizzled family members upon Wnt signaling. In Bos taurus (Bovine), this protein is AP-2 complex subunit mu (AP2M1).